The sequence spans 922 residues: Phosphoenolpyruvate carboxylase (922 aa).

A disordered region spans residues 1–20; that stretch reads MTKTLHARPSAATDTTFAPP. Residues His142 and Lys581 contribute to the active site.

It belongs to the PEPCase type 1 family. Mg(2+) is required as a cofactor.

It catalyses the reaction oxaloacetate + phosphate = phosphoenolpyruvate + hydrogencarbonate. Functionally, forms oxaloacetate, a four-carbon dicarboxylic acid source for the tricarboxylic acid cycle. This chain is Phosphoenolpyruvate carboxylase (ppc), found in Methylorubrum extorquens (strain ATCC 14718 / DSM 1338 / JCM 2805 / NCIMB 9133 / AM1) (Methylobacterium extorquens).